Here is a 688-residue protein sequence, read N- to C-terminus: Complement C1s-1 subcomponent (688 aa).

Residues 1-15 (MWYLVLFSLLASFSA) form the signal peptide. The 115-residue stretch at 16–130 (EPTMHGEILS…TGFAAYYTAI (115 aa)) folds into the CUB 1 domain. Residues glutamate 60, aspartate 68, aspartate 113, aspartate 131, valine 132, and glutamate 134 each coordinate Ca(2+). The cysteines at positions 65 and 83 are disulfide-linked. In terms of domain architecture, EGF-like; calcium-binding spans 131–172 (DVNECTDFTDVPCSHFCNNFIGGYFCSCPPEYFLHDDMRNCG). Disulfide bonds link cysteine 135/cysteine 147, cysteine 143/cysteine 156, and cysteine 158/cysteine 171. Residues asparagine 149, phenylalanine 150, and glycine 153 each contribute to the Ca(2+) site. The residue at position 149 (asparagine 149) is a (3R)-3-hydroxyasparagine. N-linked (GlcNAc...) asparagine glycosylation is present at asparagine 174. An intrachain disulfide couples cysteine 175 to cysteine 202. In terms of domain architecture, CUB 2 spans 175–290 (CSGDVFTALI…KGWKLRYHGD (116 aa)). Glutamate 226, aspartate 236, aspartate 275, glycine 278, and glutamine 279 together coordinate Ca(2+). A disulfide bridge connects residues cysteine 234 and cysteine 251. Sushi domains follow at residues 292–356 (ISCP…KCQP) and 357–423 (VYCG…RCIP). 7 disulfide bridges follow: cysteine 294–cysteine 341, cysteine 321–cysteine 354, cysteine 359–cysteine 403, cysteine 386–cysteine 421, cysteine 425–cysteine 549, cysteine 595–cysteine 618, and cysteine 627–cysteine 659. In terms of domain architecture, Peptidase S1 spans 438–680 (IFGGQPAKIE…YVDWILKTMQ (243 aa)). Residues histidine 475 and aspartate 529 each act as charge relay system in the active site. The active-site Charge relay system is the serine 631.

This sequence belongs to the peptidase S1 family. In terms of assembly, core component of the complement C1 complex, a calcium-dependent complex composed of 1 molecule of the C1Q subcomplex, 2 molecules of C1R and 2 molecules of C1S. The C1Q subcomplex is composed 18 subunits: 3 chains of C1QA, C1QB, and C1QC trimerize to form 6 collagen-like triple helices connected to six globular ligand-recognition modules. Post-translationally, cleaved and activated by C1R to generate Complement C1s subcomponent heavy and light chains. In terms of processing, the iron and 2-oxoglutarate dependent 3-hydroxylation of aspartate and asparagine is (R) stereospecific within EGF domains. Specifically expressed in male reproductive tissues.

It localises to the secreted. The protein localises to the cell surface. It carries out the reaction Cleavage of Arg-|-Ala bond in complement component C4 to form C4a and C4b, and Lys(or Arg)-|-Lys bond in complement component C2 to form C2a and C2b: the 'classical' pathway C3 convertase.. Its activity is regulated as follows. Cleaved and activated by C1R. Immunoglobulin-binding promotes autoactivation of C1R, which results in the cleavage of the Arg-Ile bond in the catalytic domain. Inhibited by C1 inhibitor (SERPING1). Its function is as follows. Component of the complement C1 complex, a multiprotein complex that initiates the classical pathway of the complement system, a cascade of proteins that leads to phagocytosis and breakdown of pathogens and signaling that strengthens the adaptive immune system. C1S is activated following association of the C1 complex with immunoglobulins (IgG or IgM) complexed with antigens to form antigen-antibody complexes on the surface of pathogens. C1S is cleaved and activated by C1R to generate C1s subcomponent heavy and light chains. C1s subcomponent light chain then cleaves and activates C2 and C4, the next components of the classical complement pathway. In terms of biological role, serine protease component of the complement C1 complex, which catalyzes cleavage and activation of C2 and C4, the next components of the classical complement pathway. Also cleaves IGFBP5 and thereby inhibits the trophic effects of IGF1. This Mus musculus (Mouse) protein is Complement C1s-1 subcomponent.